A 249-amino-acid chain; its full sequence is Protein YIP5 (249 aa).

5 consecutive transmembrane segments (helical) span residues 87-107, 131-151, 164-184, 188-208, and 228-248; these read LYGP…SNSI, ASII…ILVW, LYGY…PFGL, LASH…SIVF, and LLFG…LIFF.

The protein belongs to the YIP1 family. In terms of assembly, interacts with the YIP1 family members yip1 and yip4, and several Rab GTPases. The C-terminal cysteines in the Rab GTPase ypt2 are essential for the interaction. Interacts with snx3.

It localises to the membrane. Functionally, possible role in vesicle-mediated transport. May be involved in proper membrane localization of Rab GTPases. This is Protein YIP5 from Schizosaccharomyces pombe (strain 972 / ATCC 24843) (Fission yeast).